A 270-amino-acid chain; its full sequence is CASP-like protein 4A1 (270 aa).

The segment at 1–110 (MEELEKTQKF…PSFSSSSSTP (110 aa)) is disordered. Residues 1–121 (MEELEKTQKF…ESKWASLIRK (121 aa)) are Cytoplasmic-facing. A compositionally biased stretch (polar residues) spans 24–66 (SSPINFEMSSRSSLHSLPQTTIESPPDSPTLSSIPDSHGSSPH). A compositionally biased stretch (basic and acidic residues) spans 85-97 (NGEEEKKVSESRR). The span at 100–110 (RPSFSSSSSTP) shows a compositional bias: low complexity. Residues 122–142 (ALLGFRVIAFVSCLVSFSVMV) form a helical membrane-spanning segment. The Extracellular portion of the chain corresponds to 143 to 161 (SDRDKGWAHDSFYNYKEFR). The chain crosses the membrane as a helical span at residues 162–182 (FCLAANVIGFVYSGFMICDLV). The Cytoplasmic portion of the chain corresponds to 183–198 (YLLSTSIRRSRHNLRH). The helical transmembrane segment at 199–221 (FLEFGLDQMLAYLLASASTSASI) threads the bilayer. Topologically, residues 222 to 246 (RVDDWQSNWGADKFPDLARASVALS) are extracellular. Residues 247–267 (YVSFVAFAFCSLASGYALCAL) form a helical membrane-spanning segment. The Cytoplasmic portion of the chain corresponds to 268-270 (RSI).

It belongs to the Casparian strip membrane proteins (CASP) family. As to quaternary structure, homodimer and heterodimers.

Its subcellular location is the cell membrane. The sequence is that of CASP-like protein 4A1 from Arabidopsis thaliana (Mouse-ear cress).